The primary structure comprises 475 residues: MSIKTSNTDFKTRIRQQIEDPIMRKAVANAQQRIGANRQKMVDELGHWEEWRDRAAQIRDHVLSNLDAYLYQLSEKVTQNGGHVYFARTKEDATRYILQVAQRKNARKVVKSKSMVTEEIGVNHVLQDAGIQVIETDLGEYILQLDQDPPSHVVVPAIHKDRHQIRRVLHERLGYEGPETPEAMTLFIRQKIREDFLSAEIGITGCNFAVAETGSVCLVTNEGNARMCTTLPKTHIAVMGMERIAPTFAEVDVLITMLARSAVGARLTGYNTWLTGPREAGHVDGPEEFHLVIVDNGRSEVLASEFRDVLRCIRCGACMNTCPAYRHIGGHGYGSIYPGPIGAVISPLLGGYKDFKDLPYACSLCTACDNVCPVRIPLSKLILRHRRVMAEKGITAKAEQRAIKMFAYANSHPGLWKVGMMAGAHAASWFINGGKTPLKFGAISDWMEARDLPEADGESFRSWFKKHQAQEKKNG.

4Fe-4S ferredoxin-type domains are found at residues 303-333 (ASEF…GHGY) and 352-381 (YKDF…LSKL). 8 residues coordinate [4Fe-4S] cluster: Cys312, Cys315, Cys318, Cys322, Cys362, Cys365, Cys368, and Cys372.

The protein belongs to the LutB/YkgF family.

This is an uncharacterized protein from Escherichia coli (strain K12).